The primary structure comprises 390 residues: Ribosomal RNA large subunit methyltransferase G (390 aa).

Belongs to the methyltransferase superfamily. RlmG family.

The protein resides in the cytoplasm. The enzyme catalyses guanosine(1835) in 23S rRNA + S-adenosyl-L-methionine = N(2)-methylguanosine(1835) in 23S rRNA + S-adenosyl-L-homocysteine + H(+). In terms of biological role, specifically methylates the guanine in position 1835 (m2G1835) of 23S rRNA. In Alcanivorax borkumensis (strain ATCC 700651 / DSM 11573 / NCIMB 13689 / SK2), this protein is Ribosomal RNA large subunit methyltransferase G.